The chain runs to 90 residues: Photosystem I reaction center subunit PsaK 2 (90 aa).

A run of 2 helical transmembrane segments spans residues 20–42 and 67–89; these read LSVG…FAIQ and LATM…SSGI.

It belongs to the PsaG/PsaK family.

The protein localises to the cellular thylakoid membrane. The protein is Photosystem I reaction center subunit PsaK 2 (psaK2) of Synechocystis sp. (strain ATCC 27184 / PCC 6803 / Kazusa).